The primary structure comprises 145 residues: Cell division protein SepF (145 aa).

The protein belongs to the SepF family. Homodimer. Interacts with FtsZ.

Its subcellular location is the cytoplasm. In terms of biological role, cell division protein that is part of the divisome complex and is recruited early to the Z-ring. Probably stimulates Z-ring formation, perhaps through the cross-linking of FtsZ protofilaments. Its function overlaps with FtsA. The chain is Cell division protein SepF from Lactobacillus helveticus (strain DPC 4571).